Here is a 296-residue protein sequence, read N- to C-terminus: MATLGPMNTKVTTTHLYNHRDLREQAMIMLKEVRAIDGVEALSEQFVRGLAEPGLGHTHYTVSVDGRIIGLGATDGETSELAVHPAHRRQGIGRELIDALPTDGVWAHGDLPPAQALASSLGLNKTRELLVMAVEGDALREAAVYDNPAGITNSSLKTAPGTRDEVEGKWLKANNEAFHWHPEQGGWDRNRLTRAQSATWFRETDVLFLWDGDELVGFHWVKKHSDELQEIYVVGLAEAYRGKGLGDPLVRLGLRHMVNGGARRVILYVEADNDSAVAAYEKLGFTVAERHVVYEK.

N-acetyltransferase domains follow at residues 17-146 (YNHR…AVYD) and 156-296 (LKTA…VYEK). Glu44 provides a ligand contact to 1D-myo-inositol 2-(L-cysteinylamino)-2-deoxy-alpha-D-glucopyranoside. 81-83 (LAV) contacts acetyl-CoA. 1D-myo-inositol 2-(L-cysteinylamino)-2-deoxy-alpha-D-glucopyranoside is bound by residues Glu183, Lys222, and Glu230. Acetyl-CoA is bound by residues 234 to 236 (VGL) and 241 to 247 (RGKGLGD). Tyr268 is a 1D-myo-inositol 2-(L-cysteinylamino)-2-deoxy-alpha-D-glucopyranoside binding site.

It belongs to the acetyltransferase family. MshD subfamily. Monomer.

It catalyses the reaction 1D-myo-inositol 2-(L-cysteinylamino)-2-deoxy-alpha-D-glucopyranoside + acetyl-CoA = mycothiol + CoA + H(+). In terms of biological role, catalyzes the transfer of acetyl from acetyl-CoA to desacetylmycothiol (Cys-GlcN-Ins) to form mycothiol. The protein is Mycothiol acetyltransferase of Corynebacterium efficiens (strain DSM 44549 / YS-314 / AJ 12310 / JCM 11189 / NBRC 100395).